We begin with the raw amino-acid sequence, 136 residues long: Mitochondrial pyruvate carrier 1-like protein (136 aa).

Topologically, residues 2 to 19 are mitochondrial matrix; sequence ARMAVLWRKMRDNFQSKE. A helical transmembrane segment spans residues 20-42; the sequence is FREYVSSTHFWGPAFSWGLPLAA. The Mother cell cytoplasmic segment spans residues 43–51; it reads FKDMKASPE. Residues 52 to 74 form a helical membrane-spanning segment; the sequence is IISGRMTTALILYSAIFMRFAYR. Residues 75 to 136 lie on the Mitochondrial matrix side of the membrane; that stretch reads VQPRNLLLMA…PGSQPPKQAS (62 aa). Residues 111-136 form a disordered region; it reads EAKARDPPATAAAATSPGSQPPKQAS. Residues 117–136 show a composition bias toward low complexity; it reads PPATAAAATSPGSQPPKQAS.

The protein belongs to the mitochondrial pyruvate carrier (MPC) (TC 2.A.105) family.

It is found in the mitochondrion inner membrane. It catalyses the reaction pyruvate(out) + H(+)(out) = pyruvate(in) + H(+)(in). Its function is as follows. Mediates the uptake of pyruvate into mitochondria. The chain is Mitochondrial pyruvate carrier 1-like protein (MPC1L) from Homo sapiens (Human).